Here is a 57-residue protein sequence, read N- to C-terminus: uncharacterized protein (57 aa).

A helical transmembrane segment spans residues 34–54 (AALLDAAALVVIPGLLTAAAV).

Its subcellular location is the membrane. This is an uncharacterized protein from Dictyostelium discoideum (Social amoeba).